The sequence spans 448 residues: Mitochondrial distribution and morphology protein 10 (448 aa).

The protein belongs to the MDM10 family. As to quaternary structure, component of the ER-mitochondria encounter structure (ERMES) or MDM complex, composed of MMM1, MDM10, MDM12 and MDM34. Associates with the mitochondrial outer membrane sorting assembly machinery SAM(core) complex.

The protein localises to the mitochondrion outer membrane. Its function is as follows. Component of the ERMES/MDM complex, which serves as a molecular tether to connect the endoplasmic reticulum and mitochondria. Components of this complex are involved in the control of mitochondrial shape and protein biogenesis and may function in phospholipid exchange. MDM10 is involved in the late assembly steps of the general translocase of the mitochondrial outer membrane (TOM complex). Functions in the TOM40-specific route of the assembly of outer membrane beta-barrel proteins, including the association of TOM40 with the receptor TOM22 and small TOM proteins. Can associate with the SAM(core) complex as well as the MDM12-MMM1 complex, both involved in late steps of the major beta-barrel assembly pathway, that is responsible for biogenesis of all outer membrane beta-barrel proteins. May act as a switch that shuttles between both complexes and channels precursor proteins into the TOM40-specific pathway. Plays a role in mitochondrial morphology and in the inheritance of mitochondria. This Podospora anserina (strain S / ATCC MYA-4624 / DSM 980 / FGSC 10383) (Pleurage anserina) protein is Mitochondrial distribution and morphology protein 10.